Consider the following 349-residue polypeptide: MPVEGFITPDGVWTRGCLCMFADIDYTLNVFRGNPDEVVEQLRSAEKGRFNLLVYPLFYVDSRYSFLSSFLRLKMARNVEEASRIFKEAIYPINTLLRPFRDEKANAVSLNLFPLNFGIGKPKIAINGSNIGRSVILLTIDKNFGTKYDDFLPERGTDVEETKKILKKEFQFIEDVAISKGNLSIAKINNMSIREFLRSHNLRMRGDLENDVNREGIFGASPYILALISKETNGSTCLGLMDYNLKFYPSFFTLDIFYDEGLFLGEQLKGGLDRIKLVINSEKFDFIFVDQNIMLMFEDWIVNVFRGKDVYGVLVSFPSYTGKMQKRSMSEVEEKICLNTTLSTVFLNL.

This is an uncharacterized protein from Archaeoglobus fulgidus (strain ATCC 49558 / DSM 4304 / JCM 9628 / NBRC 100126 / VC-16).